We begin with the raw amino-acid sequence, 287 residues long: Phosphatidylserine decarboxylase proenzyme (287 aa).

Residues aspartate 89, histidine 146, and serine 252 each act as charge relay system; for autoendoproteolytic cleavage activity in the active site. Serine 252 (schiff-base intermediate with substrate; via pyruvic acid; for decarboxylase activity) is an active-site residue. Serine 252 carries the pyruvic acid (Ser); by autocatalysis modification.

This sequence belongs to the phosphatidylserine decarboxylase family. PSD-B subfamily. Prokaryotic type I sub-subfamily. As to quaternary structure, heterodimer of a large membrane-associated beta subunit and a small pyruvoyl-containing alpha subunit. It depends on pyruvate as a cofactor. Is synthesized initially as an inactive proenzyme. Formation of the active enzyme involves a self-maturation process in which the active site pyruvoyl group is generated from an internal serine residue via an autocatalytic post-translational modification. Two non-identical subunits are generated from the proenzyme in this reaction, and the pyruvate is formed at the N-terminus of the alpha chain, which is derived from the carboxyl end of the proenzyme. The autoendoproteolytic cleavage occurs by a canonical serine protease mechanism, in which the side chain hydroxyl group of the serine supplies its oxygen atom to form the C-terminus of the beta chain, while the remainder of the serine residue undergoes an oxidative deamination to produce ammonia and the pyruvoyl prosthetic group on the alpha chain. During this reaction, the Ser that is part of the protease active site of the proenzyme becomes the pyruvoyl prosthetic group, which constitutes an essential element of the active site of the mature decarboxylase.

It is found in the cell membrane. It carries out the reaction a 1,2-diacyl-sn-glycero-3-phospho-L-serine + H(+) = a 1,2-diacyl-sn-glycero-3-phosphoethanolamine + CO2. It functions in the pathway phospholipid metabolism; phosphatidylethanolamine biosynthesis; phosphatidylethanolamine from CDP-diacylglycerol: step 2/2. Its function is as follows. Catalyzes the formation of phosphatidylethanolamine (PtdEtn) from phosphatidylserine (PtdSer). The chain is Phosphatidylserine decarboxylase proenzyme from Shewanella sediminis (strain HAW-EB3).